A 1343-amino-acid chain; its full sequence is DNA-directed RNA polymerase subunit beta (1343 aa).

This sequence belongs to the RNA polymerase beta chain family. As to quaternary structure, the RNAP catalytic core consists of 2 alpha, 1 beta, 1 beta' and 1 omega subunit. When a sigma factor is associated with the core the holoenzyme is formed, which can initiate transcription.

The enzyme catalyses RNA(n) + a ribonucleoside 5'-triphosphate = RNA(n+1) + diphosphate. In terms of biological role, DNA-dependent RNA polymerase catalyzes the transcription of DNA into RNA using the four ribonucleoside triphosphates as substrates. This Shewanella violacea protein is DNA-directed RNA polymerase subunit beta.